The following is a 72-amino-acid chain: Translation initiation factor IF-1 (72 aa).

Residues 1–72 form the S1-like domain; sequence MAKEDSIEMQ…SKGRIVFRAR (72 aa).

It belongs to the IF-1 family. In terms of assembly, component of the 30S ribosomal translation pre-initiation complex which assembles on the 30S ribosome in the order IF-2 and IF-3, IF-1 and N-formylmethionyl-tRNA(fMet); mRNA recruitment can occur at any time during PIC assembly.

The protein localises to the cytoplasm. Its function is as follows. One of the essential components for the initiation of protein synthesis. Stabilizes the binding of IF-2 and IF-3 on the 30S subunit to which N-formylmethionyl-tRNA(fMet) subsequently binds. Helps modulate mRNA selection, yielding the 30S pre-initiation complex (PIC). Upon addition of the 50S ribosomal subunit IF-1, IF-2 and IF-3 are released leaving the mature 70S translation initiation complex. This Psychromonas ingrahamii (strain DSM 17664 / CCUG 51855 / 37) protein is Translation initiation factor IF-1.